A 436-amino-acid polypeptide reads, in one-letter code: MATTQLEYARQGIITDKMKEAALAEGVSPEFIREGIAAGTIIICHNIKHGNGRPLAVGKGLRTKVNANIGTSADDTDITKELEKARVAVRHGADAIMDLSTGGPVDEIRRAIIAETNACIGSVPLYQAALDAVRTKKKAIVDMTVDDIFEGIIKHAEDGVDFITVHCGVTRSTVERMKNEGRLMDVVSRGGAFTVEWMAYNNCENPLFEHFDRLLEITKAYDMTLSLGDGFRPGCLADATDRAQIHELIILGELTQRAQAAGVQVMIEGPGHVPLNQIEANILLQKRLCHGAPFYVLGPLVTDIAPGYDHITCAIGGAIAASAGADFLCYVTPSEHLRLPSVEDVREGVIASRIAAHAADIAKGVKGAMEKDIAMAKCRKKLDWEGQFNLSLDPEKAQRLRAESGVAEHGACTMCGEFCAYKVMDDAMEKQRAAGH.

Substrate contacts are provided by residues N68, M97, Y126, H166, 188-190 (SRG), 229-232 (DGFR), and E268. Zn(2+) is bound at residue H272. Residue Y295 coordinates substrate. H336 provides a ligand contact to Zn(2+). [4Fe-4S] cluster-binding residues include C412, C415, and C419.

This sequence belongs to the ThiC family. Homodimer. The cofactor is [4Fe-4S] cluster.

It catalyses the reaction 5-amino-1-(5-phospho-beta-D-ribosyl)imidazole + S-adenosyl-L-methionine = 4-amino-2-methyl-5-(phosphooxymethyl)pyrimidine + CO + 5'-deoxyadenosine + formate + L-methionine + 3 H(+). It functions in the pathway cofactor biosynthesis; thiamine diphosphate biosynthesis. In terms of biological role, catalyzes the synthesis of the hydroxymethylpyrimidine phosphate (HMP-P) moiety of thiamine from aminoimidazole ribotide (AIR) in a radical S-adenosyl-L-methionine (SAM)-dependent reaction. The sequence is that of Phosphomethylpyrimidine synthase from Geobacter metallireducens (strain ATCC 53774 / DSM 7210 / GS-15).